We begin with the raw amino-acid sequence, 254 residues long: Leucyl/phenylalanyl-tRNA--protein transferase (254 aa).

The protein belongs to the L/F-transferase family.

It localises to the cytoplasm. The catalysed reaction is N-terminal L-lysyl-[protein] + L-leucyl-tRNA(Leu) = N-terminal L-leucyl-L-lysyl-[protein] + tRNA(Leu) + H(+). It carries out the reaction N-terminal L-arginyl-[protein] + L-leucyl-tRNA(Leu) = N-terminal L-leucyl-L-arginyl-[protein] + tRNA(Leu) + H(+). It catalyses the reaction L-phenylalanyl-tRNA(Phe) + an N-terminal L-alpha-aminoacyl-[protein] = an N-terminal L-phenylalanyl-L-alpha-aminoacyl-[protein] + tRNA(Phe). Its function is as follows. Functions in the N-end rule pathway of protein degradation where it conjugates Leu, Phe and, less efficiently, Met from aminoacyl-tRNAs to the N-termini of proteins containing an N-terminal arginine or lysine. In Burkholderia vietnamiensis (strain G4 / LMG 22486) (Burkholderia cepacia (strain R1808)), this protein is Leucyl/phenylalanyl-tRNA--protein transferase.